Consider the following 292-residue polypeptide: Histamine N-methyltransferase (292 aa).

Glutamate 28 is a binding site for substrate. Residues glycine 60, glutamate 89, glutamine 94, serine 120, and isoleucine 142 each coordinate S-adenosyl-L-methionine. A substrate-binding site is contributed by asparagine 283.

The protein belongs to the class I-like SAM-binding methyltransferase superfamily. HNMT family. As to quaternary structure, monomer.

The protein localises to the cytoplasm. It carries out the reaction histamine + S-adenosyl-L-methionine = N(tau)-methylhistamine + S-adenosyl-L-homocysteine + H(+). Its function is as follows. Inactivates histamine by N-methylation. Plays an important role in degrading histamine and in regulating the airway response to histamine. The chain is Histamine N-methyltransferase (HNMT) from Bos taurus (Bovine).